Here is a 367-residue protein sequence, read N- to C-terminus: Peroxisome biogenesis protein 16 (367 aa).

The disordered stretch occupies residues G135–N173. Over residues Q147 to R159 the composition is skewed to polar residues. Helical transmembrane passes span A237–I257 and S264–N284.

The protein belongs to the peroxin-16 family. In terms of assembly, interacts with APEM9 (via both N- and C-terminus). The detection of an additional immunorelated polypeptide of 52 kDa suggests a post-translational modification of PEX16. As to expression, expressed in roots, siliques, seeds, cotyledons, leaves and flowers. Low expression in leaves and roots.

Its subcellular location is the peroxisome membrane. The protein localises to the endoplasmic reticulum membrane. Its function is as follows. Involved in the formation of peroxisomes, lipid bodies and protein bodies. The protein is Peroxisome biogenesis protein 16 of Arabidopsis thaliana (Mouse-ear cress).